Consider the following 887-residue polypeptide: Probable LRR receptor-like serine/threonine-protein kinase At5g59680 (887 aa).

The first 23 residues, 1-23 (MERSLELLLLLIRTLAIIHISQA), serve as a signal peptide directing secretion. Residues 25-510 (SQQGFISLDC…TKSGKSFPVT (486 aa)) are Extracellular-facing. N-linked (GlcNAc...) asparagine glycans are attached at residues asparagine 143, asparagine 230, asparagine 256, asparagine 289, asparagine 338, asparagine 363, asparagine 400, asparagine 416, asparagine 432, asparagine 445, asparagine 464, and asparagine 471. LRR repeat units follow at residues 411–434 (RITT…QNLT), 435–457 (TLEK…LSNM), and 459–481 (SLLV…LQRK). A helical membrane pass occupies residues 511–531 (IVASVGSAAILIVVLVLVLFL). At 532-887 (RKKKPSAVEV…FDAEMIPRAR (356 aa)) the chain is on the cytoplasmic side. Threonine 571 carries the post-translational modification Phosphothreonine. Residues 580-853 (NNFGRVVGEG…HVVIELKECL (274 aa)) form the Protein kinase domain. ATP is bound by residues 586-594 (VGEGGFGVV) and lysine 608. A Phosphotyrosine modification is found at tyrosine 653. Catalysis depends on aspartate 705, which acts as the Proton acceptor. Serine 739 carries the post-translational modification Phosphoserine. Phosphothreonine occurs at positions 740 and 745. Residue tyrosine 753 is modified to Phosphotyrosine.

Belongs to the protein kinase superfamily. Ser/Thr protein kinase family.

The protein resides in the membrane. The catalysed reaction is L-seryl-[protein] + ATP = O-phospho-L-seryl-[protein] + ADP + H(+). It catalyses the reaction L-threonyl-[protein] + ATP = O-phospho-L-threonyl-[protein] + ADP + H(+). This chain is Probable LRR receptor-like serine/threonine-protein kinase At5g59680, found in Arabidopsis thaliana (Mouse-ear cress).